The primary structure comprises 506 residues: Probable alpha-L-arabinofuranosidase B (506 aa).

The N-terminal stretch at 1–26 is a signal peptide; that stretch reads MLSQPSRERAFVLALGLVVSSSLAAA. The catalytic stretch occupies residues 27-343; that stretch reads APCDIYSSGG…ADIVAANYAV (317 aa). Intrachain disulfides connect C29–C39, C89–C94, and C184–C185. Residue D227 coordinates substrate. E229 (nucleophile) is an active-site residue. N230 contacts substrate. Residue N285 is glycosylated (N-linked (GlcNAc...) asparagine). G304 is a binding site for substrate. Catalysis depends on D305, which acts as the Proton donor. Positions 344-506 are ABD; the sequence is TSLTSGPALT…VSWVISSGFA (163 aa). Cysteines 409 and 447 form a disulfide. 7 residues coordinate substrate: H424, N426, F427, D443, H471, L476, and D496.

This sequence belongs to the glycosyl hydrolase 54 family.

It localises to the secreted. It catalyses the reaction Hydrolysis of terminal non-reducing alpha-L-arabinofuranoside residues in alpha-L-arabinosides.. It participates in glycan metabolism; L-arabinan degradation. Alpha-L-arabinofuranosidase involved in the degradation of arabinoxylan, a major component of plant hemicellulose. Able to hydrolyze 1,5-, 1,3- and 1,2-alpha-linkages not only in L-arabinofuranosyl oligosaccharides, but also in polysaccharides containing terminal non-reducing L-arabinofuranoses in side chains, like L-arabinan, arabinogalactan and arabinoxylan. This chain is Probable alpha-L-arabinofuranosidase B (abfB), found in Aspergillus clavatus (strain ATCC 1007 / CBS 513.65 / DSM 816 / NCTC 3887 / NRRL 1 / QM 1276 / 107).